A 404-amino-acid chain; its full sequence is Probable tRNA sulfurtransferase (404 aa).

The 106-residue stretch at glutamine 60–glutamate 165 folds into the THUMP domain. Residues methionine 183 to leucine 184, histidine 208 to phenylalanine 209, arginine 265, glycine 287, and glutamine 296 each bind ATP.

This sequence belongs to the ThiI family.

The protein resides in the cytoplasm. The enzyme catalyses [ThiI sulfur-carrier protein]-S-sulfanyl-L-cysteine + a uridine in tRNA + 2 reduced [2Fe-2S]-[ferredoxin] + ATP + H(+) = [ThiI sulfur-carrier protein]-L-cysteine + a 4-thiouridine in tRNA + 2 oxidized [2Fe-2S]-[ferredoxin] + AMP + diphosphate. The catalysed reaction is [ThiS sulfur-carrier protein]-C-terminal Gly-Gly-AMP + S-sulfanyl-L-cysteinyl-[cysteine desulfurase] + AH2 = [ThiS sulfur-carrier protein]-C-terminal-Gly-aminoethanethioate + L-cysteinyl-[cysteine desulfurase] + A + AMP + 2 H(+). It participates in cofactor biosynthesis; thiamine diphosphate biosynthesis. In terms of biological role, catalyzes the ATP-dependent transfer of a sulfur to tRNA to produce 4-thiouridine in position 8 of tRNAs, which functions as a near-UV photosensor. Also catalyzes the transfer of sulfur to the sulfur carrier protein ThiS, forming ThiS-thiocarboxylate. This is a step in the synthesis of thiazole, in the thiamine biosynthesis pathway. The sulfur is donated as persulfide by IscS. The chain is Probable tRNA sulfurtransferase from Streptococcus pyogenes serotype M5 (strain Manfredo).